A 183-amino-acid polypeptide reads, in one-letter code: Peptidyl-tRNA hydrolase (183 aa).

TRNA is bound at residue tyrosine 14. The active-site Proton acceptor is histidine 19. 3 residues coordinate tRNA: tyrosine 64, asparagine 66, and asparagine 112.

It belongs to the PTH family. Monomer.

The protein resides in the cytoplasm. The catalysed reaction is an N-acyl-L-alpha-aminoacyl-tRNA + H2O = an N-acyl-L-amino acid + a tRNA + H(+). In terms of biological role, hydrolyzes ribosome-free peptidyl-tRNAs (with 1 or more amino acids incorporated), which drop off the ribosome during protein synthesis, or as a result of ribosome stalling. Its function is as follows. Catalyzes the release of premature peptidyl moieties from peptidyl-tRNA molecules trapped in stalled 50S ribosomal subunits, and thus maintains levels of free tRNAs and 50S ribosomes. The polypeptide is Peptidyl-tRNA hydrolase (Anaplasma phagocytophilum (strain HZ)).